A 234-amino-acid chain; its full sequence is UPF0173 metal-dependent hydrolase Meso_1362 (234 aa).

This sequence belongs to the UPF0173 family.

This Chelativorans sp. (strain BNC1) protein is UPF0173 metal-dependent hydrolase Meso_1362.